We begin with the raw amino-acid sequence, 420 residues long: Multifunctional CCA protein (420 aa).

2 residues coordinate ATP: glycine 8 and arginine 11. 2 residues coordinate CTP: glycine 8 and arginine 11. Mg(2+) contacts are provided by aspartate 21 and aspartate 23. The ATP site is built by arginine 91, arginine 137, and arginine 140. 3 residues coordinate CTP: arginine 91, arginine 137, and arginine 140. An HD domain is found at 228–334; sequence TFVHTMLVLQ…LKLFNRLDVW (107 aa).

The protein belongs to the tRNA nucleotidyltransferase/poly(A) polymerase family. Bacterial CCA-adding enzyme type 1 subfamily. In terms of assembly, monomer. Can also form homodimers and oligomers. The cofactor is Mg(2+). Requires Ni(2+) as cofactor.

The catalysed reaction is a tRNA precursor + 2 CTP + ATP = a tRNA with a 3' CCA end + 3 diphosphate. It catalyses the reaction a tRNA with a 3' CCA end + 2 CTP + ATP = a tRNA with a 3' CCACCA end + 3 diphosphate. In terms of biological role, catalyzes the addition and repair of the essential 3'-terminal CCA sequence in tRNAs without using a nucleic acid template. Adds these three nucleotides in the order of C, C, and A to the tRNA nucleotide-73, using CTP and ATP as substrates and producing inorganic pyrophosphate. tRNA 3'-terminal CCA addition is required both for tRNA processing and repair. Also involved in tRNA surveillance by mediating tandem CCA addition to generate a CCACCA at the 3' terminus of unstable tRNAs. While stable tRNAs receive only 3'-terminal CCA, unstable tRNAs are marked with CCACCA and rapidly degraded. The polypeptide is Multifunctional CCA protein (Pasteurella multocida (strain Pm70)).